A 219-amino-acid polypeptide reads, in one-letter code: Glycosylphosphatidylinositol anchor biosynthesis protein 11 (219 aa).

The Cytoplasmic portion of the chain corresponds to 1–45; it reads MPAKKRTRKTVKKTVSFSDDTTLTTHQNREKKNVDHDRPPVYVRK. The residue at position 16 (Ser16) is a Phosphoserine. The chain crosses the membrane as a helical span at residues 46-66; that stretch reads TPLMTFPYHLVALLYYYVFVS. A topological domain (lumenal) is located at residue Ser67. A helical membrane pass occupies residues 68-88; sequence NFNTVKLLSFLIPTQVAYLVL. Residues 89-108 lie on the Cytoplasmic side of the membrane; the sequence is QFNKCTVYGNKIIKINYSLT. Residues 109 to 129 form a helical membrane-spanning segment; sequence IICLGVTFLLSFPTMLLTILF. Over 130 to 135 the chain is Lumenal; the sequence is GAPLMD. A helical membrane pass occupies residues 136–156; that stretch reads LLWETWLLSLHFAFLAYPAVY. Residues 157–170 lie on the Cytoplasmic side of the membrane; that stretch reads SVFNCDFKVGLWKK. The chain crosses the membrane as a helical span at residues 171–191; that stretch reads YFIFIVVGGWISCVVIPLDWD. Residues 192 to 198 are Lumenal-facing; sequence RDWQNWP. Residues 199–217 form a helical membrane-spanning segment; sequence IPIVVGGYLGALVGYTIGA. Residues 218–219 lie on the Cytoplasmic side of the membrane; that stretch reads YI.

The protein belongs to the PIGF family.

It localises to the endoplasmic reticulum membrane. It functions in the pathway glycolipid biosynthesis; glycosylphosphatidylinositol-anchor biosynthesis. Its function is as follows. Acts in the GPI biosynthetic pathway between GlcNAc-PI synthesis and GPI transfer to protein. Required for the formation of complete GPI precursors CP1 and CP2. This is Glycosylphosphatidylinositol anchor biosynthesis protein 11 (GPI11) from Saccharomyces cerevisiae (strain ATCC 204508 / S288c) (Baker's yeast).